The primary structure comprises 271 residues: Phycocyanobilin lyase subunit alpha (271 aa).

Belongs to the CpcE/RpcE/PecE family. In terms of assembly, cpcE and CpcF associate to form a lyase.

Required for the chromophorylation of the cpcA1 gene product. In Pseudanabaena tenuis (strain PCC 7409), this protein is Phycocyanobilin lyase subunit alpha (cpcE1).